We begin with the raw amino-acid sequence, 234 residues long: MTIKRTKDINHDTFRKAWRNYRLAPVAIAVSAVFMLSACEKSDETVSLYMNADECSQANPSQSEQCTTAYNNALKEAEKTAPKYATKEDCIAEFGEAQCTQTPAQAGLGTTTSSTSTNGEAQAQQQQSGSFWMPLMAGYMMGRLMGGGSAPSQPLFSSKSATSPANGQFVDSTGKSYGPATAGGRSMTVPKTAMAPKPATTTTITRGGFGDSVAKQSTMQRSASSGSTSRSVGG.

2 disordered regions span residues 105 to 129 (QAGL…QQSG) and 149 to 234 (SAPS…SVGG). Residues 110–127 (TTTSSTSTNGEAQAQQQQ) show a composition bias toward low complexity. A compositionally biased stretch (polar residues) spans 150-175 (APSQPLFSSKSATSPANGQFVDSTGK). Composition is skewed to low complexity over residues 188 to 205 (TVPK…TTIT) and 216 to 234 (QSTM…SVGG).

This sequence belongs to the UPF0441 family.

This is UPF0441 protein plu3956 from Photorhabdus laumondii subsp. laumondii (strain DSM 15139 / CIP 105565 / TT01) (Photorhabdus luminescens subsp. laumondii).